A 503-amino-acid polypeptide reads, in one-letter code: 4-trimethylaminobutyraldehyde dehydrogenase (503 aa).

NAD(+)-binding positions include Lys-189 and 241–245 (GSVPT). Glu-263 (proton acceptor) is an active-site residue. The active-site Nucleophile is the Cys-297. Glu-400 lines the NAD(+) pocket.

This sequence belongs to the aldehyde dehydrogenase family. As to quaternary structure, homotetramer.

It is found in the cytoplasm. The protein resides in the cytosol. It catalyses the reaction 4-(trimethylamino)butanal + NAD(+) + H2O = 4-(trimethylamino)butanoate + NADH + 2 H(+). The catalysed reaction is an aldehyde + NAD(+) + H2O = a carboxylate + NADH + 2 H(+). It functions in the pathway amine and polyamine biosynthesis; carnitine biosynthesis. Converts gamma-trimethylaminobutyraldehyde into gamma-butyrobetaine with high efficiency (in vitro). Can catalyze the irreversible oxidation of a broad range of aldehydes to the corresponding acids in an NAD-dependent reaction, but with low efficiency. The sequence is that of 4-trimethylaminobutyraldehyde dehydrogenase (aldh9A1) from Gadus morhua subsp. callarias (Baltic cod).